The primary structure comprises 123 residues: Small ribosomal subunit protein uS13c (123 aa).

The segment at 89–123 (RGKRHRNNLPVRGQRTRTNARSRRGSKKTVTGKKK) is disordered. A compositionally biased stretch (basic residues) spans 102–123 (QRTRTNARSRRGSKKTVTGKKK).

This sequence belongs to the universal ribosomal protein uS13 family. Part of the 30S ribosomal subunit.

It is found in the plastid. The protein localises to the chloroplast. Its function is as follows. Located at the top of the head of the 30S subunit, it contacts several helices of the 16S rRNA. This is Small ribosomal subunit protein uS13c from Phaeodactylum tricornutum (strain CCAP 1055/1).